The primary structure comprises 590 residues: Proline--tRNA ligase (590 aa).

It belongs to the class-II aminoacyl-tRNA synthetase family. ProS type 1 subfamily. As to quaternary structure, homodimer.

It is found in the cytoplasm. The enzyme catalyses tRNA(Pro) + L-proline + ATP = L-prolyl-tRNA(Pro) + AMP + diphosphate. Functionally, catalyzes the attachment of proline to tRNA(Pro) in a two-step reaction: proline is first activated by ATP to form Pro-AMP and then transferred to the acceptor end of tRNA(Pro). As ProRS can inadvertently accommodate and process non-cognate amino acids such as alanine and cysteine, to avoid such errors it has two additional distinct editing activities against alanine. One activity is designated as 'pretransfer' editing and involves the tRNA(Pro)-independent hydrolysis of activated Ala-AMP. The other activity is designated 'posttransfer' editing and involves deacylation of mischarged Ala-tRNA(Pro). The misacylated Cys-tRNA(Pro) is not edited by ProRS. This is Proline--tRNA ligase from Leifsonia xyli subsp. xyli (strain CTCB07).